The following is a 186-amino-acid chain: Elongation factor P (186 aa).

This sequence belongs to the elongation factor P family.

The protein resides in the cytoplasm. Its pathway is protein biosynthesis; polypeptide chain elongation. In terms of biological role, involved in peptide bond synthesis. Stimulates efficient translation and peptide-bond synthesis on native or reconstituted 70S ribosomes in vitro. Probably functions indirectly by altering the affinity of the ribosome for aminoacyl-tRNA, thus increasing their reactivity as acceptors for peptidyl transferase. The polypeptide is Elongation factor P (Cupriavidus pinatubonensis (strain JMP 134 / LMG 1197) (Cupriavidus necator (strain JMP 134))).